The primary structure comprises 828 residues: Translation initiation factor IF-2 (828 aa).

Disordered regions lie at residues 48 to 76 (SYSGSTTTLSLNKEKGSLETGSSSGSEEF) and 112 to 148 (ASQEDPIEVEQEESSDTNKVKEEPKIEEVKDIEESTL). Over residues 49-58 (YSGSTTTLSL) the composition is skewed to polar residues. Low complexity predominate over residues 65 to 74 (LETGSSSGSE). Acidic residues predominate over residues 116–126 (DPIEVEQEESS). A compositionally biased stretch (basic and acidic residues) spans 127–144 (DTNKVKEEPKIEEVKDIE). In terms of domain architecture, tr-type G spans 326-496 (SRAPVVTVMG…LLIAEMQNLK (171 aa)). Residues 335-342 (GHVDHGKT) form a G1 region. 335 to 342 (GHVDHGKT) serves as a coordination point for GTP. The G2 stretch occupies residues 360-364 (GITQH). Residues 382–385 (DTPG) are G3. Residues 382–386 (DTPGH) and 436–439 (NKID) each bind GTP. A G4 region spans residues 436–439 (NKID). Residues 472 to 474 (SAL) form a G5 region.

The protein belongs to the TRAFAC class translation factor GTPase superfamily. Classic translation factor GTPase family. IF-2 subfamily.

It is found in the cytoplasm. Its function is as follows. One of the essential components for the initiation of protein synthesis. Protects formylmethionyl-tRNA from spontaneous hydrolysis and promotes its binding to the 30S ribosomal subunits. Also involved in the hydrolysis of GTP during the formation of the 70S ribosomal complex. The protein is Translation initiation factor IF-2 of Rickettsia bellii (strain OSU 85-389).